The chain runs to 299 residues: Maintenance of mitochondrial morphology protein 1 (299 aa).

Over 1-15 (MTNIIFSLQPTFTQG) the chain is Lumenal. The helical transmembrane segment at 16-36 (LILGQLSVLVLLGLILKYLFL) threads the bilayer. Residues 37 to 299 (DSTKNPFETT…QEESKRQEEA (263 aa)) are Cytoplasmic-facing. The disordered stretch occupies residues 47–68 (SYHPQFDRKPARKQQAQDSQSQ). The 209-residue stretch at 73–281 (DVESLDWFNL…LPGLASVAEA (209 aa)) folds into the SMP-LTD domain.

Belongs to the MMM1 family. As to quaternary structure, homodimer. Component of the ER-mitochondria encounter structure (ERMES) or MDM complex, composed of MMM1, MDM10, MDM12 and MDM34. An MMM1 homodimer associates with one molecule of MDM12 on each side in a pairwise head-to-tail manner, and the SMP-LTD domains of MMM1 and MDM12 generate a continuous hydrophobic tunnel for phospholipid trafficking.

It is found in the endoplasmic reticulum membrane. Functionally, component of the ERMES/MDM complex, which serves as a molecular tether to connect the endoplasmic reticulum (ER) and mitochondria. Components of this complex are involved in the control of mitochondrial shape and protein biogenesis, and function in nonvesicular lipid trafficking between the ER and mitochondria. The MDM12-MMM1 subcomplex functions in the major beta-barrel assembly pathway that is responsible for biogenesis of all outer membrane beta-barrel proteins, and acts in a late step after the SAM complex. The MDM10-MDM12-MMM1 subcomplex further acts in the TOM40-specific pathway after the action of the MDM12-MMM1 complex. Essential for establishing and maintaining the structure of mitochondria and maintenance of mtDNA nucleoids. The polypeptide is Maintenance of mitochondrial morphology protein 1 (Coprinopsis cinerea (strain Okayama-7 / 130 / ATCC MYA-4618 / FGSC 9003) (Inky cap fungus)).